The primary structure comprises 116 residues: Large ribosomal subunit protein bL20 (116 aa).

The protein belongs to the bacterial ribosomal protein bL20 family.

In terms of biological role, binds directly to 23S ribosomal RNA and is necessary for the in vitro assembly process of the 50S ribosomal subunit. It is not involved in the protein synthesizing functions of that subunit. The protein is Large ribosomal subunit protein bL20 of Helicobacter pylori (strain P12).